The following is a 397-amino-acid chain: Transcription factor TGAL6 (397 aa).

The bZIP domain maps to P104–R148. The basic motif stretch occupies residues K106–K126. Positions L132–L146 are leucine-zipper. The 216-residue stretch at A175–R390 folds into the DOG1 domain.

The protein belongs to the bZIP family.

It localises to the nucleus. Its function is as follows. Transcriptional regulator involved in defense response. This is Transcription factor TGAL6 from Oryza sativa subsp. japonica (Rice).